We begin with the raw amino-acid sequence, 395 residues long: 8-amino-7-oxononanoate synthase (395 aa).

R24 is a substrate binding site. A pyridoxal 5'-phosphate-binding site is contributed by 111–112; the sequence is GF. H136 is a substrate binding site. Residues S184, 209–212, and 240–243 each bind pyridoxal 5'-phosphate; these read DDAH and TLSK. Position 243 is an N6-(pyridoxal phosphate)lysine (K243). Position 357 (T357) interacts with substrate.

It belongs to the class-II pyridoxal-phosphate-dependent aminotransferase family. BioF subfamily. In terms of assembly, homodimer. Requires pyridoxal 5'-phosphate as cofactor.

The enzyme catalyses 6-carboxyhexanoyl-[ACP] + L-alanine + H(+) = (8S)-8-amino-7-oxononanoate + holo-[ACP] + CO2. The protein operates within cofactor biosynthesis; biotin biosynthesis. In terms of biological role, catalyzes the decarboxylative condensation of pimeloyl-[acyl-carrier protein] and L-alanine to produce 8-amino-7-oxononanoate (AON), [acyl-carrier protein], and carbon dioxide. The sequence is that of 8-amino-7-oxononanoate synthase from Alkaliphilus metalliredigens (strain QYMF).